Consider the following 471-residue polypeptide: 3-isopropylmalate dehydratase large subunit (471 aa).

3 residues coordinate [4Fe-4S] cluster: C347, C409, and C412.

It belongs to the aconitase/IPM isomerase family. LeuC type 1 subfamily. Heterodimer of LeuC and LeuD. [4Fe-4S] cluster serves as cofactor.

It catalyses the reaction (2R,3S)-3-isopropylmalate = (2S)-2-isopropylmalate. Its pathway is amino-acid biosynthesis; L-leucine biosynthesis; L-leucine from 3-methyl-2-oxobutanoate: step 2/4. Catalyzes the isomerization between 2-isopropylmalate and 3-isopropylmalate, via the formation of 2-isopropylmaleate. The sequence is that of 3-isopropylmalate dehydratase large subunit from Buchnera aphidicola subsp. Rhopalosiphum padi.